Reading from the N-terminus, the 141-residue chain is Large ribosomal subunit protein uL11 (141 aa).

Belongs to the universal ribosomal protein uL11 family. Part of the ribosomal stalk of the 50S ribosomal subunit. Interacts with L10 and the large rRNA to form the base of the stalk. L10 forms an elongated spine to which 2 L12 dimers bind in a sequential fashion forming a pentameric L10(L12)2(L12)2 complex. In stalled/isolated 50S subunits interacts with RqcH. Post-translationally, one or more lysine residues are methylated.

In terms of biological role, forms part of the ribosomal stalk which helps the ribosome interact with GTP-bound translation factors. Required to recruit RqcH, which is part of the ribosome quality control system (RQC), to stalled 50S ribosomal subunits. This is Large ribosomal subunit protein uL11 from Bacillus subtilis (strain 168).